The primary structure comprises 635 residues: MEPAMEPETLEARINRATNPLNKELNWASINSFCEQLNEDFEGPPLATRLLAHKIQSPQEWEAIQALTVLETCMKSCGKRFHDEVGKFRFLNELIKVVSPKYLGSRTSEKVKSKILELLYSWTVCLPEEVKIAEAYQMLKKQGIVKSDPKLPEDAIFPLPPPRPKNVIFEDEEKSKMLARLLKSSHPEDLRAANKLIKEMVQEDQKRMEKISKRVNAIEEVNNNVKLLTEMVMSHSQGAASSSSEDLMKELYQRCERMRPTLFRLASDTEDNDEALAEILQANDNLTQVINLYKQLVRGEEVNGDATASSIPGSTSALLDLSGLDLPPPGTTQPATPTRPGNQSSPEQLSASVSLLDDELMSLGLSDPTPPSGTSSDSVGWDNFQSSDGTESSVPPPAQAPSMDCRPPAQAPPPTSSGLDDLDLLGKTLMQQALPPEAQQVRWEKQQPAPRLTLRDLQSKSSSPSPGAASLLHTTSPEPPGPPPQATPTEFSLTSITVPLESIKPSSILPVTVYDQHGFRVLFHFARDPLPGRSDVLVVVVSMLSTAPQPIRNIVFQSAVPKVMKVRLQPPSGTELPAFNPIVHPSAITQVLLLANPQKEKVRLRYKLIFTMGDQTYNEMGDVDQFPPPETWGSL.

Methionine 1 carries the post-translational modification N-acetylmethionine. The region spanning 17–147 (ATNPLNKELN…MLKKQGIVKS (131 aa)) is the VHS domain. The interaction with ARF3 stretch occupies residues 114 to 273 (KILELLYSWT…RLASDTEDND (160 aa)). Residues 171-298 (DEEKSKMLAR…VINLYKQLVR (128 aa)) form the GAT domain. Phosphoserine is present on serine 185. Residues 299–505 (GEEVNGDATA…ITVPLESIKP (207 aa)) form a unstructured hinge region. The segment at 305-349 (DATASSIPGSTSALLDLSGLDLPPPGTTQPATPTRPGNQSSPEQL) is disordered. Residues 313 to 325 (GSTSALLDLSGLD) show a composition bias toward low complexity. Serine 354 is modified (phosphoserine). The short motif at 357–361 (DDELM) is the Autoinhibitory element. Disordered regions lie at residues 362–422 (SLGL…LDDL) and 455–490 (RDLQSKSSSPSPGAASLLHTTSPEPPGPPPQATPTE). Residues 383–393 (NFQSSDGTESS) show a composition bias toward polar residues. Serine 417 carries the post-translational modification Phosphoserine. Positions 459–476 (SKSSSPSPGAASLLHTTS) are enriched in low complexity. Residues 477-486 (PEPPGPPPQA) show a composition bias toward pro residues. Residues 506–627 (SSILPVTVYD…NEMGDVDQFP (122 aa)) form the GAE domain.

Belongs to the GGA protein family. As to quaternary structure, monomer. Interacts with GGA2 and GGA3. Binds to clathrin and activated ARFs, including ARF1, ARF5 and ARF6. Interacts with RABEP1 and RABGEF1. Interacts with the type-I membrane proteins LRP3, M6PR/CD-MPR and IGF2R/CI-MPR. Interacts (via N-terminal VHS domain) with SORL1/sorLA and SORT1 (via C-terminal cytosolic domain). Interacts with EPN4. Interacts with CCDC91. Interacts with HEATR5B/p200a. Interacts with SYNRG/gamma-synergin. Interacts (via GAE doamin) with NECAP1 and NECAP2. Interacts (via GAE domain) with AFTPH/aftiphilin. Interacts with TSG101 and UBC. Interacts with RNF11. Interacts (via VHS domain) with BACE1 (via DXXLL motif); the interaction highly increases when BACE1 is phosphorylated at 'Ser-498'. Interacts with CNST. Interacts with ADRA2B. Interacts with ARL3; the interaction recruits, in collaboration with RABEP1, PKD1:PKD2 complex to trans-Golgi network and is required for ciliary targeting. Phosphorylated by CK2 and dephosphorylated by PP2A. Phosphorylation of GGA1 allows the internal DXXLL motif to bind the VHS domain and to inhibit the recognition of cargo signals. In terms of processing, ubiquitinated.

The protein localises to the golgi apparatus. The protein resides in the trans-Golgi network membrane. Its subcellular location is the endosome membrane. It is found in the early endosome membrane. Functionally, plays a role in protein sorting and trafficking between the trans-Golgi network (TGN) and endosomes. Mediates the ARF-dependent recruitment of clathrin to the TGN and binds ubiquitinated proteins and membrane cargo molecules with a cytosolic acidic cluster-dileucine (DXXLL) motif. Mediates export of the GPCR receptor ADRA2B to the cell surface. Required for targeting PKD1:PKD2 complex from the trans-Golgi network to the cilium membrane. Regulates retrograde transport of proteins such as phosphorylated form of BACE1 from endosomes to the trans-Golgi network. In Mus musculus (Mouse), this protein is ADP-ribosylation factor-binding protein GGA1 (Gga1).